A 110-amino-acid chain; its full sequence is MQVFRAVVLFILAGLAEIAGGYLVWQWLRADRSIWFGVLGAILLVGYGFLPTLQPQVWSFGRVYAAYGGVFIVLSLAWGWLIDHNPPDQPSLVGACLALVGAAIILYWPR.

4 consecutive transmembrane segments (helical) span residues 7-27, 33-53, 63-83, and 89-109; these read VVLF…VWQW, SIWF…LPTL, VYAA…WLID, and QPSL…LYWP.

This sequence belongs to the UPF0060 family.

The protein resides in the cell membrane. The protein is UPF0060 membrane protein Haur_1798 of Herpetosiphon aurantiacus (strain ATCC 23779 / DSM 785 / 114-95).